A 63-amino-acid chain; its full sequence is UPF0434 protein BAV2101 (63 aa).

The protein belongs to the UPF0434 family.

The chain is UPF0434 protein BAV2101 from Bordetella avium (strain 197N).